The following is a 1005-amino-acid chain: Ephrin type-A receptor 5 (1005 aa).

The disordered stretch occupies residues 1-24 (MRGSGPRGAGRRRTQGRGGGGDTP). An N-terminal signal peptide occupies residues 1–26 (MRGSGPRGAGRRRTQGRGGGGDTPRV). Residues 27-575 (PASLAGCYSA…GASNDQSQIP (549 aa)) lie on the Extracellular side of the membrane. Positions 62-240 (EVNLLDSRTV…YYKKCPSVVR (179 aa)) constitute an Eph LBD domain. Residues N266, N301, N371, N425, N438, and N463 are each glycosylated (N-linked (GlcNAc...) asparagine). Fibronectin type-III domains lie at 359 to 469 (PPSA…TNQA) and 470 to 564 (APSP…TTPV). The chain crosses the membrane as a helical span at residues 576-596 (IIGVSVTVGVILLAVMIGFLL). Topologically, residues 597-1005 (SGSCCECGCG…MDAVAQVTLE (409 aa)) are cytoplasmic. Phosphotyrosine; by autocatalysis occurs at positions 652 and 658. Residues 677–938 (ITIERVIGAG…DIVNMLDKLI (262 aa)) form the Protein kinase domain. Residues 683-691 (IGAGEFGEV) and K709 each bind ATP. The Proton acceptor role is filled by D802. Phosphotyrosine; by autocatalysis occurs at positions 835 and 984. One can recognise an SAM domain in the interval 967-1005 (GAYRSVGEWLEATKMGRYTEIFMENGYSSMDAVAQVTLE).

Belongs to the protein kinase superfamily. Tyr protein kinase family. Ephrin receptor subfamily. As to quaternary structure, heterotetramer upon binding of the ligand. The heterotetramer is composed of an ephrin dimer and a receptor dimer. Oligomerization is probably required to induce biological responses. Interacts (via SAM domain) with SAMD5 (via SAM domain). Phosphorylated. Phosphorylation is stimulated by the ligand EFNA5. Dephosphorylation upon stimulation by glucose, inhibits EPHA5 forward signaling and results in insulin secretion. Almost exclusively expressed in the nervous system. Predominantly expressed in neurons.

The protein localises to the cell membrane. It localises to the cell projection. The protein resides in the axon. It is found in the dendrite. The enzyme catalyses L-tyrosyl-[protein] + ATP = O-phospho-L-tyrosyl-[protein] + ADP + H(+). Functionally, receptor tyrosine kinase which binds promiscuously GPI-anchored ephrin-A family ligands residing on adjacent cells, leading to contact-dependent bidirectional signaling into neighboring cells. The signaling pathway downstream of the receptor is referred to as forward signaling while the signaling pathway downstream of the ephrin ligand is referred to as reverse signaling. Among GPI-anchored ephrin-A ligands, EFNA5 most probably constitutes the cognate/functional ligand for EPHA5. Functions as an axon guidance molecule during development and may be involved in the development of the retinotectal, entorhino-hippocampal and hippocamposeptal pathways. Together with EFNA5 plays also a role in synaptic plasticity in adult brain through regulation of synaptogenesis. In addition to its function in the nervous system, the interaction of EPHA5 with EFNA5 mediates communication between pancreatic islet cells to regulate glucose-stimulated insulin secretion. The chain is Ephrin type-A receptor 5 (Epha5) from Rattus norvegicus (Rat).